Reading from the N-terminus, the 411-residue chain is Translation initiation factor 2 subunit gamma (411 aa).

The tr-type G domain occupies 9-203 (QAEVNIGMVG…AIEDFIPTPK (195 aa)). The G1 stretch occupies residues 18–25 (GHVDHGKT). Residues Asp21, Thr25, Gly46, and Thr48 each contribute to the Mg(2+) site. Residue 21 to 26 (DHGKTT) coordinates GTP. The tract at residues 46–50 (GITIK) is G2. The Zn(2+) site is built by Cys61, Cys64, Cys73, and Cys76. The G3 stretch occupies residues 90–93 (DAPG). GTP contacts are provided by residues 146–149 (NKIE) and 181–183 (SAL). The segment at 146–149 (NKIE) is G4. The segment at 181–183 (SAL) is G5.

This sequence belongs to the TRAFAC class translation factor GTPase superfamily. Classic translation factor GTPase family. EIF2G subfamily. Heterotrimer composed of an alpha, a beta and a gamma chain. Requires Mg(2+) as cofactor.

The enzyme catalyses GTP + H2O = GDP + phosphate + H(+). In terms of biological role, eIF-2 functions in the early steps of protein synthesis by forming a ternary complex with GTP and initiator tRNA. In Pyrococcus horikoshii (strain ATCC 700860 / DSM 12428 / JCM 9974 / NBRC 100139 / OT-3), this protein is Translation initiation factor 2 subunit gamma.